We begin with the raw amino-acid sequence, 82 residues long: M-zodatoxin-Lt3b (82 aa).

Positions 1-22 (MKTYAVLLALVVAFVCIAESTG) are cleaved as a signal peptide. The propeptide occupies 23–61 (YPVEDLEDDELTELEAEALLEDLLEDLELEDLDYNEEAR). Positions 58–61 (EEAR) match the Processing quadruplet motif motif. Alanine amide is present on alanine 81.

In terms of processing, cleavage of the propeptide depends on the processing quadruplet motif (XXXR, with at least one of X being E). Expressed by the venom gland.

The protein resides in the secreted. Its function is as follows. It has antimicrobial activity against Gram-positive bacteria (A.globiformis VKM Ac-1112 (MIC=0.7 uM), and B.subtilis VKM B-501 (MIC=2.9 uM)), Gram-negative bacteria (E.coli DH5-alpha (MIC=23 uM), E.coli MH1 (MIC=28 uM), and P.aeruginosa PAO1 (MIC&gt;45 uM)), and yeasts (P.pastoris GS115 (MIC=23 uM), and S.cerevisiae Y190 (MIC=23 uM)). Does not have hemolytic against rabbit erythrocytes. Causes paralysis, but is not lethal when injected into insect (M.domestica) larvae. In Lachesana tarabaevi (Spider), this protein is M-zodatoxin-Lt3b.